Reading from the N-terminus, the 414-residue chain is 4-hydroxy-3-methylbut-2-en-1-yl diphosphate synthase (flavodoxin) (414 aa).

Residues Cys304, Cys307, Cys350, and Glu357 each contribute to the [4Fe-4S] cluster site.

The protein belongs to the IspG family. [4Fe-4S] cluster serves as cofactor.

The catalysed reaction is (2E)-4-hydroxy-3-methylbut-2-enyl diphosphate + oxidized [flavodoxin] + H2O + 2 H(+) = 2-C-methyl-D-erythritol 2,4-cyclic diphosphate + reduced [flavodoxin]. Its pathway is isoprenoid biosynthesis; isopentenyl diphosphate biosynthesis via DXP pathway; isopentenyl diphosphate from 1-deoxy-D-xylulose 5-phosphate: step 5/6. Functionally, converts 2C-methyl-D-erythritol 2,4-cyclodiphosphate (ME-2,4cPP) into 1-hydroxy-2-methyl-2-(E)-butenyl 4-diphosphate. This is 4-hydroxy-3-methylbut-2-en-1-yl diphosphate synthase (flavodoxin) from Aromatoleum aromaticum (strain DSM 19018 / LMG 30748 / EbN1) (Azoarcus sp. (strain EbN1)).